Here is a 436-residue protein sequence, read N- to C-terminus: tRNA-2-methylthio-N(6)-dimethylallyladenosine synthase (436 aa).

The 117-residue stretch at 5–121 (RKLFIKTYGC…LPDMLERTEG (117 aa)) folds into the MTTase N-terminal domain. [4Fe-4S] cluster-binding residues include Cys-14, Cys-50, Cys-84, Cys-158, Cys-162, and Cys-165. The Radical SAM core domain maps to 144 to 373 (ALRGPTAFLT…LGEQQRAAQA (230 aa)). The TRAM domain maps to 373–435 (AAMVGRELGV…PNSLAGERIG (63 aa)).

The protein belongs to the methylthiotransferase family. MiaB subfamily. Monomer. [4Fe-4S] cluster is required as a cofactor.

It localises to the cytoplasm. It catalyses the reaction N(6)-dimethylallyladenosine(37) in tRNA + (sulfur carrier)-SH + AH2 + 2 S-adenosyl-L-methionine = 2-methylsulfanyl-N(6)-dimethylallyladenosine(37) in tRNA + (sulfur carrier)-H + 5'-deoxyadenosine + L-methionine + A + S-adenosyl-L-homocysteine + 2 H(+). Its function is as follows. Catalyzes the methylthiolation of N6-(dimethylallyl)adenosine (i(6)A), leading to the formation of 2-methylthio-N6-(dimethylallyl)adenosine (ms(2)i(6)A) at position 37 in tRNAs that read codons beginning with uridine. The polypeptide is tRNA-2-methylthio-N(6)-dimethylallyladenosine synthase (Cereibacter sphaeroides (strain ATCC 17025 / ATH 2.4.3) (Rhodobacter sphaeroides)).